A 322-amino-acid chain; its full sequence is tRNA-dihydrouridine synthase B (322 aa).

Residues 16–18 (PMA) and Q70 contribute to the FMN site. C100 serves as the catalytic Proton donor. FMN is bound by residues K139, 200–202 (NGD), and 224–225 (GR).

The protein belongs to the Dus family. DusB subfamily. It depends on FMN as a cofactor.

The catalysed reaction is a 5,6-dihydrouridine in tRNA + NAD(+) = a uridine in tRNA + NADH + H(+). It carries out the reaction a 5,6-dihydrouridine in tRNA + NADP(+) = a uridine in tRNA + NADPH + H(+). Catalyzes the synthesis of 5,6-dihydrouridine (D), a modified base found in the D-loop of most tRNAs, via the reduction of the C5-C6 double bond in target uridines. This chain is tRNA-dihydrouridine synthase B, found in Shewanella oneidensis (strain ATCC 700550 / JCM 31522 / CIP 106686 / LMG 19005 / NCIMB 14063 / MR-1).